We begin with the raw amino-acid sequence, 383 residues long: Sphingosine kinase 1 (383 aa).

A DAGKc domain is found at 12 to 159; it reads PRPCRVLVLL…MNLLSLHTAS (148 aa). ATP contacts are provided by residues 22–24 and 54–58; these read NPR and TERQN. Substrate is bound at residue 79-82; the sequence is SGDG. Catalysis depends on Asp-81, which acts as the Proton donor/acceptor. ATP is bound by residues Glu-86 and 111–113; that span reads GSG. Short sequence motifs (nuclear export signal) lie at residues 147–155 and 161–169; these read LSPMNLLSL and RQLYSVLSL. Asp-178 is a substrate binding site. Arg-185 and Arg-191 together coordinate ATP. Phosphothreonine is present on Thr-193. Ser-225 carries the post-translational modification Phosphoserine. 340-342 lines the ATP pocket; the sequence is DGE. Positions 363 to 383 are disordered; that stretch reads GSSDSPSGRDSQRRPPPEEPI. Positions 372 to 383 are enriched in basic and acidic residues; the sequence is DSQRRPPPEEPI.

In terms of assembly, interacts with ACY1. Binds to calmodulin. Interacts with SPHKAP. Interacts with CIB1, the interaction occurs in a calcium-dependent manner. Interacts with TRAF2. Interacts with EEF1A1; the interaction enhances SPHK1 kinase activity. The cofactor is Mg(2+). Expressed in microglia (at protein level).

The protein resides in the cytoplasm. It localises to the nucleus. Its subcellular location is the cell membrane. The protein localises to the endosome membrane. It is found in the membrane. The protein resides in the clathrin-coated pit. It localises to the synapse. The enzyme catalyses a sphingoid base + ATP = a sphingoid 1-phosphate + ADP + H(+). It catalyses the reaction L-seryl-[protein] + acetyl-CoA = O-acetyl-L-seryl-[protein] + CoA. The catalysed reaction is sphinganine + ATP = sphinganine 1-phosphate + ADP + H(+). It carries out the reaction sphing-4-enine + ATP = sphing-4-enine 1-phosphate + ADP + H(+). The enzyme catalyses 1-O-hexadecyl-2-amino-sn-glycerol + ATP = 1-O-hexadecyl-2-desoxy-2-amino-sn-glycero-3-phosphate + ADP + H(+). With respect to regulation, acetyltransferase activity increases in presence of the kinase substrate, sphingosine. In Purkinje cells, kinase activity on sphingosine increases in presence of VEGFA. In neurons, kinase activity increases during the first 24h in presence of Amyloid-beta protein 42 to decrease after 96h. Its function is as follows. Catalyzes the phosphorylation of sphingosine to form sphingosine 1-phosphate (SPP), a lipid mediator with both intra- and extracellular functions. Also acts on D-erythro-sphingosine and to a lesser extent sphinganine, but not other lipids, such as D,L-threo-dihydrosphingosine, N,N-dimethylsphingosine, diacylglycerol, ceramide, or phosphatidylinositol. In contrast to proapoptotic SPHK2, has a negative effect on intracellular ceramide levels, enhances cell growth and inhibits apoptosis. Involved in the regulation of inflammatory response and neuroinflammation. Via the product sphingosine 1-phosphate, stimulates TRAF2 E3 ubiquitin ligase activity, and promotes activation of NF-kappa-B in response to TNF signaling leading to IL17 secretion. In response to TNF and in parallel to NF-kappa-B activation, negatively regulates RANTES induction through p38 MAPK signaling pathway. Involved in endocytic membrane trafficking induced by sphingosine, recruited to dilate endosomes, also plays a role on later stages of endosomal maturation and membrane fusion independently of its kinase activity. In Purkinje cells, seems to be also involved in the regulation of autophagosome-lysosome fusion upon VEGFA. In terms of biological role, has serine acetyltransferase activity on PTGS2/COX2 in an acetyl-CoA dependent manner. The acetyltransferase activity increases in presence of the kinase substrate, sphingosine. During neuroinflammation, through PTGS2 acetylation, promotes neuronal secretion of specialized preresolving mediators (SPMs), especially 15-R-lipoxin A4, which results in an increase of phagocytic microglia. This chain is Sphingosine kinase 1 (Sphk1), found in Rattus norvegicus (Rat).